The sequence spans 76 residues: ATP synthase subunit 9, mitochondrial (76 aa).

2 helical membrane passes run 14 to 34 (ISTIGLIGAGIGIGIVFAALI) and 56 to 76 (ALSEATGLFCLMISFMLLFAV).

The protein belongs to the ATPase C chain family. In terms of assembly, F-type ATPases have 2 components, CF(1) - the catalytic core - and CF(0) - the membrane proton channel. CF(1) has five subunits: alpha(3), beta(3), gamma(1), delta(1), epsilon(1). CF(0) has three main subunits: a, b and c.

The protein localises to the mitochondrion membrane. Functionally, mitochondrial membrane ATP synthase (F(1)F(0) ATP synthase or Complex V) produces ATP from ADP in the presence of a proton gradient across the membrane which is generated by electron transport complexes of the respiratory chain. F-type ATPases consist of two structural domains, F(1) - containing the extramembraneous catalytic core and F(0) - containing the membrane proton channel, linked together by a central stalk and a peripheral stalk. During catalysis, ATP synthesis in the catalytic domain of F(1) is coupled via a rotary mechanism of the central stalk subunits to proton translocation. Part of the complex F(0) domain. A homomeric c-ring of probably 10 subunits is part of the complex rotary element. This is ATP synthase subunit 9, mitochondrial (ATP9) from Candida glabrata (strain ATCC 2001 / BCRC 20586 / JCM 3761 / NBRC 0622 / NRRL Y-65 / CBS 138) (Yeast).